A 406-amino-acid polypeptide reads, in one-letter code: 2,3-bisphosphoglycerate-independent phosphoglycerate mutase (406 aa).

Positions 164 to 184 (VSSNDPKKTGVQPKTIHPDDD) are disordered.

Belongs to the BPG-independent phosphoglycerate mutase family. A-PGAM subfamily.

It catalyses the reaction (2R)-2-phosphoglycerate = (2R)-3-phosphoglycerate. It functions in the pathway carbohydrate degradation; glycolysis; pyruvate from D-glyceraldehyde 3-phosphate: step 3/5. Its function is as follows. Catalyzes the interconversion of 2-phosphoglycerate and 3-phosphoglycerate. This Methanocorpusculum labreanum (strain ATCC 43576 / DSM 4855 / Z) protein is 2,3-bisphosphoglycerate-independent phosphoglycerate mutase.